A 250-amino-acid chain; its full sequence is ADPR responsive transcriptional repressor NtrR (250 aa).

The Nudix hydrolase domain occupies 26–157; sequence LMTVDMAIFS…DHHDLLQQAF (132 aa). The Nudix box signature appears at 62-85; sequence GFVDLEQDQNLMACAHRKLLEKTG. The tract at residues 164–237 is winged helix-like DNA-binding region; that stretch reads TRYTALPISL…RFALQDYDFN (74 aa).

With respect to regulation, DNA binding is efficiently suppressed in the presence of ADP-ribose (ADPR) or phospho-ADPR. Accumulation of ADPR resulting from NAD degradation may be interpreted by the cell as a signal to activate recycling of nicotinamide. In terms of biological role, involved in the transcriptional regulation of the nondeamidating salvage pathway for production of NAD from nicotinamide. Represses expression of the prs-nadV-nrtR operon by binding to the DNA region located upstream of the operon, thus blocking the nondeamidating pathway. In Acinetobacter baylyi (strain ATCC 33305 / BD413 / ADP1), this protein is ADPR responsive transcriptional repressor NtrR.